A 285-amino-acid polypeptide reads, in one-letter code: NADH-dependent oxidoreductase ucdB (285 aa).

T87 provides a ligand contact to NAD(+). The active site involves K156.

It belongs to the HIBADH-related family. NP60 subfamily.

The protein operates within secondary metabolite biosynthesis. Nonribosomal peptide synthetase that mediates the biosynthesis of usterphenyllins and uscandidusins, p-terphenyl derivatives. Within the pathway, ucdB alone catalyzes both reduction and dehydration of atromentin to form a terphenyl triol intermediate. The pathway begin with the biosynthesis of 4-hydroxyphenylpyruvate (HPPA) from L-tyrosine, possibly by the aminotransferase ucdG. The nonribosomal peptide synthetase ucdA then condenses two HPPA units to produce atromentin. The key step in this pathway is the reduction and dehydration of atromentin to form a terphenyl triol intermediate, performed by the NAD-dependent dehydrogenase ucdB. Further O-methylation by the methyltransferase ucdC forms terphenyllin carrying two methoxy moieties at C-9 and C-12, and subsequent dihydroxylation at C-3 of ring A and C-15 of ring C by the flavin-dependent oxygenase ucdD leads to 3,15-dihydroxyterphenyllin. Prenylation by ucdE at position C-5 of ring A forms usterphenyllin B, and is followed by a second prenylation at position C-14 of ring C to form usterphenyllin A. The following furan ring formation that leads to uscandidusins A and B was proven to be an unexpected spontaneous non-enzymatic reaction. The sequence is that of NADH-dependent oxidoreductase ucdB from Aspergillus ustus.